We begin with the raw amino-acid sequence, 846 residues long: Translation initiation factor IF-2 (846 aa).

Residues 345–512 (SRAPVVTIMG…AVLLQSEVLE (168 aa)) form the tr-type G domain. A G1 region spans residues 354-361 (GHVDHGKT). Position 354–361 (354–361 (GHVDHGKT)) interacts with GTP. Residues 379–383 (GITQH) are G2. The segment at 400–403 (DTPG) is G3. GTP is bound by residues 400-404 (DTPGH) and 454-457 (NKID). The segment at 454 to 457 (NKID) is G4. A G5 region spans residues 490–492 (SAK).

It belongs to the TRAFAC class translation factor GTPase superfamily. Classic translation factor GTPase family. IF-2 subfamily.

The protein resides in the cytoplasm. One of the essential components for the initiation of protein synthesis. Protects formylmethionyl-tRNA from spontaneous hydrolysis and promotes its binding to the 30S ribosomal subunits. Also involved in the hydrolysis of GTP during the formation of the 70S ribosomal complex. The protein is Translation initiation factor IF-2 of Francisella tularensis subsp. holarctica (strain FTNF002-00 / FTA).